A 1403-amino-acid chain; its full sequence is Mannuronan C5-epimerase AlgE1 (1403 aa).

7 PbH1 repeats span residues 133–155 (DRDV…DPHE), 157–179 (TINL…VADY), 180–202 (QVGG…NIVT), 204–226 (TNDF…VVQR), 257–279 (AHDV…RVYG), 280–302 (AQDV…YAEV), and 320–359 (TTGT…SIDG). Disordered stretches follow at residues 372 to 395 (STVS…NDAL) and 408 to 428 (AGDD…GAGR). Hemolysin-type calcium-binding repeat units lie at residues 388–403 (GSAG…AHET), 406–422 (GQAG…NDIL), 424–440 (GGAG…ADTF), 557–573 (GYGG…DDIL), 574–591 (VGGA…ADVF), 697–712 (EGTD…EANE), 716–732 (GLDG…DDIL), and 734–750 (GGAG…ADTF). 8 PbH1 repeats span residues 977–999 (DRNV…DPHE), 1001–1023 (TINL…VADY), 1024–1046 (LVDS…NIVT), 1048–1070 (TYDF…TIQR), 1101–1123 (TNNV…RLYG), 1124–1146 (TEDV…YPEV), 1163–1185 (TLNT…AVRE), and 1190–1212 (SDYT…QLSG). Hemolysin-type calcium-binding repeat units lie at residues 1227 to 1243 (GTDG…NDQL), 1244 to 1261 (YGGA…DDLL), and 1263 to 1279 (GGAG…ADTF).

Belongs to the D-mannuronate C5-epimerase family. Requires Ca(2+) as cofactor.

It is found in the secreted. The catalysed reaction is [(1-&gt;4)-beta-D-mannuronosyl](n) = [alginate](n). Its pathway is glycan biosynthesis; alginate biosynthesis. With respect to regulation, inhibited by zinc. In terms of biological role, converts beta-D-mannuronic acid (M) to alpha-L-guluronic acid (G), producing a polymer with gel-forming capacity, required for the formation of the cyst coat. The protein is Mannuronan C5-epimerase AlgE1 of Azotobacter vinelandii.